A 318-amino-acid polypeptide reads, in one-letter code: Extracellular metalloprotease AO090012001025 (318 aa).

A signal peptide spans 1-23 (MSHFPTLHILILVIANLQIQCFA). Residues Asn-106, Asn-121, and Asn-193 are each glycosylated (N-linked (GlcNAc...) asparagine). His-229 lines the Zn(2+) pocket. The active site involves Glu-230. Residue His-233 coordinates Zn(2+). Cys-268 and Cys-295 are joined by a disulfide.

It belongs to the peptidase M43B family.

It is found in the secreted. Secreted metalloproteinase that allows assimilation of proteinaceous substrates. This chain is Extracellular metalloprotease AO090012001025, found in Aspergillus oryzae (strain ATCC 42149 / RIB 40) (Yellow koji mold).